The sequence spans 437 residues: Proline--tRNA ligase (437 aa).

This sequence belongs to the class-II aminoacyl-tRNA synthetase family. ProS type 2 subfamily. Homodimer.

It is found in the cytoplasm. The catalysed reaction is tRNA(Pro) + L-proline + ATP = L-prolyl-tRNA(Pro) + AMP + diphosphate. Functionally, catalyzes the attachment of proline to tRNA(Pro) in a two-step reaction: proline is first activated by ATP to form Pro-AMP and then transferred to the acceptor end of tRNA(Pro). The chain is Proline--tRNA ligase from Rhizorhabdus wittichii (strain DSM 6014 / CCUG 31198 / JCM 15750 / NBRC 105917 / EY 4224 / RW1) (Sphingomonas wittichii).